Reading from the N-terminus, the 385-residue chain is MKNITILGATGSIGTQTLDVIRREKEELKLVAISANKSYKKVIEIIKEFKPKYAVLMEENAFKIVEDFCIDNKIDTKVLKGMEGMIYISTLEEVNTVVTSVVGMIGLVPTIKAIESGKDIALANKETLVVAGELVISKAKEHNVNILPVDSEHGAIFQCLRGNKKEEVKNIIVTASGGPFRGKKKEELIDVKPEHALKHPKWNMGRKISIDSATLMNKGLEVIEAHFLFGVDYENIKVVVHPQSIVHSMVEYKDGSVIAQMATPDMKLPIQYALNYPNRKESQIEPLDFYKISNLTFEKPDMDTFLPLKLAYEAGKKGGVMPAILNGANEVAVDLFLKGKIEFLQIGDLLQECMNKFYKSMEATLENVISVDKEVREYLGKKYDI.

6 residues coordinate NADPH: Thr-10, Gly-11, Ser-12, Ile-13, Lys-37, and Asn-124. 1-deoxy-D-xylulose 5-phosphate is bound at residue Lys-125. Glu-126 is an NADPH binding site. Asp-150 provides a ligand contact to Mn(2+). 1-deoxy-D-xylulose 5-phosphate contacts are provided by Ser-151, Glu-152, Ser-176, and His-199. A Mn(2+)-binding site is contributed by Glu-152. Gly-205 contacts NADPH. Ser-212, Asn-217, Lys-218, and Glu-221 together coordinate 1-deoxy-D-xylulose 5-phosphate. Residue Glu-221 coordinates Mn(2+).

The protein belongs to the DXR family. Mg(2+) serves as cofactor. Requires Mn(2+) as cofactor.

The enzyme catalyses 2-C-methyl-D-erythritol 4-phosphate + NADP(+) = 1-deoxy-D-xylulose 5-phosphate + NADPH + H(+). Its pathway is isoprenoid biosynthesis; isopentenyl diphosphate biosynthesis via DXP pathway; isopentenyl diphosphate from 1-deoxy-D-xylulose 5-phosphate: step 1/6. In terms of biological role, catalyzes the NADPH-dependent rearrangement and reduction of 1-deoxy-D-xylulose-5-phosphate (DXP) to 2-C-methyl-D-erythritol 4-phosphate (MEP). This chain is 1-deoxy-D-xylulose 5-phosphate reductoisomerase, found in Clostridium botulinum (strain Kyoto / Type A2).